A 459-amino-acid polypeptide reads, in one-letter code: Exodeoxyribonuclease 7 large subunit (459 aa).

The protein belongs to the XseA family. In terms of assembly, heterooligomer composed of large and small subunits.

The protein resides in the cytoplasm. It catalyses the reaction Exonucleolytic cleavage in either 5'- to 3'- or 3'- to 5'-direction to yield nucleoside 5'-phosphates.. Bidirectionally degrades single-stranded DNA into large acid-insoluble oligonucleotides, which are then degraded further into small acid-soluble oligonucleotides. The chain is Exodeoxyribonuclease 7 large subunit from Pseudomonas savastanoi pv. phaseolicola (strain 1448A / Race 6) (Pseudomonas syringae pv. phaseolicola (strain 1448A / Race 6)).